We begin with the raw amino-acid sequence, 905 residues long: Tight junction protein ZO-3 (905 aa).

A PDZ 1 domain is found at 11–93 (TATLYKDPRR…TANVTVKRPR (83 aa)). Residues 92–167 (PRRVQLPATK…GGGSEANGLD (76 aa)) form a disordered region. A phosphoserine mark is found at Ser111 and Ser128. Over residues 124–133 (GDSSSGSGRS) the composition is skewed to low complexity. Residues 139-155 (RRSRAGRRGRVGSHGRR) are compositionally biased toward basic residues. Residues Ser156, Ser157, Ser161, Ser195, and Ser311 each carry the phosphoserine modification. Residues 187–264 (SVLVKRRNSE…ELTLLVLRDS (78 aa)) form the PDZ 2 domain. Residues 289-367 (LTSELSQAPP…QSLEDRGYSP (79 aa)) are disordered. Thr317 is subject to Phosphothreonine. Residues Ser319, Ser343, and Ser359 each carry the phosphoserine modification. In terms of domain architecture, PDZ 3 spans 368–434 (DTRVVSFPKG…LTREEAVQFL (67 aa)). One can recognise an SH3 domain in the interval 464–541 (GDSFYIRTHF…PNQSRAEQLA (78 aa)). In terms of domain architecture, Guanylate kinase-like spans 573–754 (RRGTKKASTQ…WYQEVKAVIQ (182 aa)). Residue Ser584 is modified to Phosphoserine. Disordered regions lie at residues 773–818 (EDLD…PQDV) and 850–905 (TDKW…ATDL). The segment covering 851–877 (DKWETQADSHYTQDQRRQDSMRTYKHE) has biased composition (basic and acidic residues). 2 positions are modified to phosphoserine: Ser891 and Ser892.

This sequence belongs to the MAGUK family. In terms of assembly, interacts with occludin OCLN, claudins and TPJ1. Interacts with PATJ. Interacts with UBN1. Interacts with FASLG. Interacts with CCND1. In terms of processing, phosphorylated. Is concentrated in various types of epithelium, in tissues such as the lung, liver and kidney, but not in endothelium or at cadherin-based cell-cell adhesion sites.

The protein localises to the cell membrane. Its subcellular location is the cell junction. The protein resides in the tight junction. It is found in the nucleus. Functionally, tjp1, Tjp2, and Tjp3 are closely related scaffolding proteins that link tight junction (TJ) transmembrane proteins such as claudins, junctional adhesion molecules, and occludin to the actin cytoskeleton. The tight junction acts to limit movement of substances through the paracellular space and as a boundary between the compositionally distinct apical and basolateral plasma membrane domains of epithelial and endothelial cells. Binds and recruits PatJ to tight junctions where it connects and stabilizes apical and lateral components of tight junctions. Promotes cell-cycle progression through the sequestration of cyclin D1 (Ccnd1) at tight junctions during mitosis which prevents Ccnd1 degradation during M-phase and enables S-phase transition. With Tjp1 and Tjp2, participates in the junctional retention and stability of the transcription factor DbpA, but is not involved in its shuttling to the nucleus. Contrary to Tjp2, Tjp3 is dispensable for individual viability, embryonic development, epithelial differentiation, and the establishment of TJs, at least in the laboratory environment. This chain is Tight junction protein ZO-3 (Tjp3), found in Mus musculus (Mouse).